A 1185-amino-acid polypeptide reads, in one-letter code: Chromosome partition protein Smc (1185 aa).

34-41 serves as a coordination point for ATP; that stretch reads PNGSGKSN. 2 coiled-coil regions span residues 174–376 and 412–526; these read WRRS…EKDI and ENIV…KLDV. The SMC hinge domain occupies 534 to 644; the sequence is VGEIISLQKK…CENIDNAFEI (111 aa). A coiled-coil region spans residues 679 to 1039; it reads NIIGRKREIE…IDAMTEKMKG (361 aa).

This sequence belongs to the SMC family. Homodimer.

The protein localises to the cytoplasm. Required for chromosome condensation and partitioning. The polypeptide is Chromosome partition protein Smc (Clostridium kluyveri (strain NBRC 12016)).